Here is a 254-residue protein sequence, read N- to C-terminus: Thiazole synthase (254 aa).

The Schiff-base intermediate with DXP role is filled by lysine 95. Residues glycine 156, 182 to 183, and 204 to 205 contribute to the 1-deoxy-D-xylulose 5-phosphate site; these read AG and NT.

Belongs to the ThiG family. In terms of assembly, homotetramer. Forms heterodimers with either ThiH or ThiS.

It localises to the cytoplasm. It carries out the reaction [ThiS sulfur-carrier protein]-C-terminal-Gly-aminoethanethioate + 2-iminoacetate + 1-deoxy-D-xylulose 5-phosphate = [ThiS sulfur-carrier protein]-C-terminal Gly-Gly + 2-[(2R,5Z)-2-carboxy-4-methylthiazol-5(2H)-ylidene]ethyl phosphate + 2 H2O + H(+). It participates in cofactor biosynthesis; thiamine diphosphate biosynthesis. Its function is as follows. Catalyzes the rearrangement of 1-deoxy-D-xylulose 5-phosphate (DXP) to produce the thiazole phosphate moiety of thiamine. Sulfur is provided by the thiocarboxylate moiety of the carrier protein ThiS. In vitro, sulfur can be provided by H(2)S. This chain is Thiazole synthase, found in Shewanella sediminis (strain HAW-EB3).